We begin with the raw amino-acid sequence, 238 residues long: Uracil-DNA glycosylase (238 aa).

D72 acts as the Proton acceptor in catalysis.

Belongs to the uracil-DNA glycosylase (UDG) superfamily. UNG family.

It is found in the cytoplasm. The enzyme catalyses Hydrolyzes single-stranded DNA or mismatched double-stranded DNA and polynucleotides, releasing free uracil.. Its function is as follows. Excises uracil residues from the DNA which can arise as a result of misincorporation of dUMP residues by DNA polymerase or due to deamination of cytosine. This chain is Uracil-DNA glycosylase, found in Chromobacterium violaceum (strain ATCC 12472 / DSM 30191 / JCM 1249 / CCUG 213 / NBRC 12614 / NCIMB 9131 / NCTC 9757 / MK).